Reading from the N-terminus, the 330-residue chain is Adenylate isopentenyltransferase 5, chloroplastic (330 aa).

A chloroplast-targeting transit peptide spans methionine 1–methionine 39. Glycine 40–serine 47 lines the ATP pocket.

Belongs to the IPP transferase family. Expressed in root primordia, columella root caps, upper part of young inflorescences, and fruit abscission zones.

The protein resides in the plastid. The protein localises to the chloroplast. The enzyme catalyses dimethylallyl diphosphate + ADP = N(6)-(dimethylallyl)adenosine 5'-diphosphate + diphosphate. The catalysed reaction is dimethylallyl diphosphate + ATP = N(6)-(dimethylallyl)adenosine 5'-triphosphate + diphosphate. Involved in cytokinin biosynthesis. Catalyzes the transfer of an isopentenyl group from dimethylallyl diphosphate (DMAPP) to ATP and ADP. This is Adenylate isopentenyltransferase 5, chloroplastic (IPT5) from Arabidopsis thaliana (Mouse-ear cress).